We begin with the raw amino-acid sequence, 417 residues long: 3-oxo-isoapionate-4-phosphate decarboxylase (417 aa).

Residues K177, D179, and E180 each contribute to the Mg(2+) site. K177 carries the post-translational modification N6-carboxylysine.

This sequence belongs to the RuBisCO large chain family. It depends on Mg(2+) as a cofactor.

The enzyme catalyses 3-oxoisoapionate 4-phosphate + H(+) = L-erythrulose 1-phosphate + CO2. Its pathway is carbohydrate metabolism. Functionally, involved in catabolism of D-apiose. Catalyzes the decarboxylation of 3-oxo-isoapionate 4-phosphate to L-erythrulose 1-phosphate. The polypeptide is 3-oxo-isoapionate-4-phosphate decarboxylase (Rhizobium etli (strain ATCC 51251 / DSM 11541 / JCM 21823 / NBRC 15573 / CFN 42)).